We begin with the raw amino-acid sequence, 555 residues long: MTHLSDLDIANQATIKPISEIAEKIGIPEDALEQYGHYKAKIDINKLDDKGDRGKVVLVTAMSPTPAGEGKSTVTVGLADAFHELGENVMMALREPALGPVFGIKGGATGGGYAQVLPMEDINLHFNGDFHAITTANNALAAFIDNHIHQGNELGIDQRRIEWKRVLDMNDRELRKVVVGLGGPTQGVPREDGFNITVASEIMTILCLSTGLKDLKASIANITIGYTRDRKPVTVADLKVEGALAMILKDAIKPNLVQSIEGTPALIHGGPFANIAHGCNSIIATETARKLADIVVTEAGFGSDLGAEKFMNIKARKAGFEPSAAVVVATIRALKMHGGVAKDDLKEENVQAVRDGLANLERHIENIRSFGVEPVVALNAFVSDTEAEEQVVEDWAKEHGVRIALTEVWEKGGKGGVELAKQVQEVLNEKHDFKHTYDLDLPIEEKIEKVVTNIYGGNKVTFTSGALKQLKQIKENGWDNYPVCMAKTQYSFTDDKDRLGAPDDFEITIRELQPKTGAGFIVALTGAIMTMPGLPKKPAALNMDVTEDGHAKGLF.

Position 65-72 (65-72 (TPAGEGKS)) interacts with ATP.

It belongs to the formate--tetrahydrofolate ligase family.

The catalysed reaction is (6S)-5,6,7,8-tetrahydrofolate + formate + ATP = (6R)-10-formyltetrahydrofolate + ADP + phosphate. It participates in one-carbon metabolism; tetrahydrofolate interconversion. The protein is Formate--tetrahydrofolate ligase of Staphylococcus carnosus (strain TM300).